The following is a 196-amino-acid chain: Imidazole glycerol phosphate synthase subunit HisH (196 aa).

Positions 2–196 (DVVILDTGCA…AQLMKNFLEM (195 aa)) constitute a Glutamine amidotransferase type-1 domain. Residue Cys77 is the Nucleophile of the active site. Residues His178 and Glu180 contribute to the active site.

In terms of assembly, heterodimer of HisH and HisF.

The protein resides in the cytoplasm. It carries out the reaction 5-[(5-phospho-1-deoxy-D-ribulos-1-ylimino)methylamino]-1-(5-phospho-beta-D-ribosyl)imidazole-4-carboxamide + L-glutamine = D-erythro-1-(imidazol-4-yl)glycerol 3-phosphate + 5-amino-1-(5-phospho-beta-D-ribosyl)imidazole-4-carboxamide + L-glutamate + H(+). The catalysed reaction is L-glutamine + H2O = L-glutamate + NH4(+). Its pathway is amino-acid biosynthesis; L-histidine biosynthesis; L-histidine from 5-phospho-alpha-D-ribose 1-diphosphate: step 5/9. Its function is as follows. IGPS catalyzes the conversion of PRFAR and glutamine to IGP, AICAR and glutamate. The HisH subunit catalyzes the hydrolysis of glutamine to glutamate and ammonia as part of the synthesis of IGP and AICAR. The resulting ammonia molecule is channeled to the active site of HisF. The sequence is that of Imidazole glycerol phosphate synthase subunit HisH from Yersinia pestis.